Reading from the N-terminus, the 502-residue chain is Zinc finger protein 488 (502 aa).

The SET domain occupies 8–130; it reads RSLWTNDSKI…EGEELLVWYD (123 aa). Residue tyrosine 129 participates in S-adenosyl-L-methionine binding. Residues 151-174 form a C2H2-type 1; atypical zinc finger; the sequence is YTCTRCGQAFKNENPFLAHCRFLC. Disordered regions lie at residues 267-303 and 338-361; these read SEPT…KSSR and PSKR…LDSF. The segment covering 269 to 286 has biased composition (polar residues); sequence PTDNAQTNESKISKNSAF. 2 consecutive C2H2-type zinc fingers follow at residues 438-460 and 479-501; these read NWCA…MRSH and LTCP…MTSH.

This sequence belongs to the krueppel C2H2-type zinc-finger protein family. In terms of tissue distribution, expressed in pMN progenitors and oligodendrocyte lineage cells in the embryo with expression declining in oligodendrocytes undergoing differentiation.

The protein localises to the nucleus. In terms of biological role, transcriptional repressor. May have histone methyltransferase activity. Negatively regulates shh signaling activity in pMN progenitor cells which prevents their switch from motor neuron to oligodendrocyte precursor cell production. Independently of shh activity, also regulates oligodendrocyte formation. This chain is Zinc finger protein 488, found in Danio rerio (Zebrafish).